The chain runs to 176 residues: Ferritin heavy polypeptide-like 17E (176 aa).

Positions 10-159 constitute a Ferritin-like diiron domain; that stretch reads QNYDWQCEDA…GYLTNLRQMG (150 aa). Fe cation-binding residues include C27, E107, and Q141.

It belongs to the ferritin family. In terms of tissue distribution, expressed in the testes and spermatogonia.

The chain is Ferritin heavy polypeptide-like 17E from Mus musculus (Mouse).